The sequence spans 361 residues: MKAKVIVGMSGGVDSSVAAWLLKEQGYQVEGLFMKNWEQDDHNDYCPAAKDLADAQAVCNQLRIPLHTVNFSKEYWDRVFAYFLSEYEKGRTPNPDVLCNKEIKFNAFLNYALTLGADYIATGHYAKNTIEGSIGYLFKAKDREKDQTYFLHAVEPEALSKTIFPIGDFTKPQIREFAKQLGLVTHAKKDSTGICFIGEKRFKTFLNEFILAKPGDIKSTGGKTLGQHDGLMFYTLGQRQGLGIGGLQNSTDEPWYVVDKDIASNTLYVAQGSQHPMLYSQGLICGPIHWLADYENHLPLTCFAKTRYRQTDQACMISPPDNNQHYVMFSNPQRAITPGQFIVFYEKNQCLGGATIEQIIR.

ATP-binding positions include 8–15 (GMSGGVDS) and Met-34. Residues 94–96 (NPD) form an interaction with target base in tRNA region. Cys-99 acts as the Nucleophile in catalysis. Cys-99 and Cys-195 are oxidised to a cystine. Residue Gly-123 participates in ATP binding. The interaction with tRNA stretch occupies residues 145 to 147 (KDQ). Cys-195 serves as the catalytic Cysteine persulfide intermediate. Residues 307-308 (RY) are interaction with tRNA.

The protein belongs to the MnmA/TRMU family.

Its subcellular location is the cytoplasm. It carries out the reaction S-sulfanyl-L-cysteinyl-[protein] + uridine(34) in tRNA + AH2 + ATP = 2-thiouridine(34) in tRNA + L-cysteinyl-[protein] + A + AMP + diphosphate + H(+). Its function is as follows. Catalyzes the 2-thiolation of uridine at the wobble position (U34) of tRNA, leading to the formation of s(2)U34. The chain is tRNA-specific 2-thiouridylase MnmA from Legionella pneumophila (strain Lens).